The primary structure comprises 370 residues: Gibberellin 2-beta-dioxygenase 2 (370 aa).

The Fe2OG dioxygenase domain maps to 186–306; the sequence is DNDSLIRINH…RLSTIYFAAP (121 aa). Y196 is a 2-oxoglutarate binding site. Positions 224, 226, and 287 each coordinate Fe cation. Positions 297 and 299 each coordinate 2-oxoglutarate.

This sequence belongs to the iron/ascorbate-dependent oxidoreductase family. GA2OX subfamily. Requires Fe(2+) as cofactor.

It catalyses the reaction gibberellin A1 + 2-oxoglutarate + O2 = gibberellin A8 + succinate + CO2. Catalyzes the 2-beta-hydroxylation of several biologically active gibberellins, leading to the homeostatic regulation of their endogenous level. Catabolism of gibberellins (GAs) plays a central role in plant development. This Oryza sativa subsp. japonica (Rice) protein is Gibberellin 2-beta-dioxygenase 2.